The sequence spans 345 residues: MHGNSEMQKINQTSAMPEKTDVHWSGRFSVAPMLDWTDRHCRYFLRLLSRNTLLYTEMVTTGAIIHGKGDYLAYSEEEHPVALQLGGSDPAALAQCAKLAEARGYDEINLNVGCPSDRVQNGMFGACLMGNAQLVADCVKAMRDVVSIPVTVKTRIGIDDQDSYEFLCDFINTVSGKGECEMFIIHARKAWLSGLSPKENREIPPLDYPRVYQLKRDFPHLTMSINGGIKSLEEAKAHLQHMDGVMVGREAYQNPGILAAVDREIFGSSDTDADPVAVVRAMYPYIERELSQGTYLGHITRHMLGLFQGIPGARQWRRYLSENAHKAGADINVLEHALKLVADKR.

Residues 32–34 and Gln-84 contribute to the FMN site; that span reads PML. Catalysis depends on Cys-114, which acts as the Proton donor. FMN is bound by residues Lys-153, His-186, 226–228, and 248–249; these read NGG and GR.

The protein belongs to the Dus family. DusA subfamily. FMN serves as cofactor.

The catalysed reaction is 5,6-dihydrouridine(20) in tRNA + NADP(+) = uridine(20) in tRNA + NADPH + H(+). The enzyme catalyses 5,6-dihydrouridine(20) in tRNA + NAD(+) = uridine(20) in tRNA + NADH + H(+). It carries out the reaction 5,6-dihydrouridine(20a) in tRNA + NADP(+) = uridine(20a) in tRNA + NADPH + H(+). It catalyses the reaction 5,6-dihydrouridine(20a) in tRNA + NAD(+) = uridine(20a) in tRNA + NADH + H(+). Functionally, catalyzes the synthesis of 5,6-dihydrouridine (D), a modified base found in the D-loop of most tRNAs, via the reduction of the C5-C6 double bond in target uridines. Specifically modifies U20 and U20a in tRNAs. This chain is tRNA-dihydrouridine(20/20a) synthase, found in Escherichia coli O157:H7.